The following is a 95-amino-acid chain: MGRSTKKGPYVDPKLLKKIRQLNEAGEKKIIKTWSRASMIVPEMVGHTIAVYNGLKHIPVYITENMVGHRLGEFSFTRRFGGHADKSASKGQVKK.

This sequence belongs to the universal ribosomal protein uS19 family.

Functionally, protein S19 forms a complex with S13 that binds strongly to the 16S ribosomal RNA. In Thermosipho africanus (strain TCF52B), this protein is Small ribosomal subunit protein uS19.